The chain runs to 294 residues: 33 kDa chaperonin (294 aa).

2 disulfide bridges follow: C230–C232 and C263–C266.

This sequence belongs to the HSP33 family. Under oxidizing conditions two disulfide bonds are formed involving the reactive cysteines. Under reducing conditions zinc is bound to the reactive cysteines and the protein is inactive.

Its subcellular location is the cytoplasm. Redox regulated molecular chaperone. Protects both thermally unfolding and oxidatively damaged proteins from irreversible aggregation. Plays an important role in the bacterial defense system toward oxidative stress. This is 33 kDa chaperonin from Chromobacterium violaceum (strain ATCC 12472 / DSM 30191 / JCM 1249 / CCUG 213 / NBRC 12614 / NCIMB 9131 / NCTC 9757 / MK).